Reading from the N-terminus, the 352-residue chain is NAD(P)H pyrophosphatase NUDT13, mitochondrial (352 aa).

Residues 1-20 (MSLYCGIACRRKFFWCYRLL) constitute a mitochondrion transit peptide. Residues 196 to 323 (PQMAPVAITL…PYTQQQNGTF (128 aa)) enclose the Nudix hydrolase domain. The Nudix box motif lies at 216 to 240 (RQSSFPKGMYSALAGFCDIGESVEE).

The protein belongs to the Nudix hydrolase family. Mg(2+) is required as a cofactor. Requires Mn(2+) as cofactor. Highly expressed in metastasis-suppressed chromosome 6 melanoma hybrids.

It localises to the mitochondrion. It carries out the reaction NADH + H2O = reduced beta-nicotinamide D-ribonucleotide + AMP + 2 H(+). It catalyses the reaction NAD(+) + H2O = beta-nicotinamide D-ribonucleotide + AMP + 2 H(+). The enzyme catalyses NADPH + H2O = reduced beta-nicotinamide D-ribonucleotide + adenosine 2',5'-bisphosphate + 2 H(+). In terms of biological role, NAD(P)H pyrophosphatase that hydrolyzes NADH into NMNH and AMP, and NADPH into NMNH and 2',5'-ADP. Has a marked preference for the reduced pyridine nucleotides. Does not show activity toward NAD-capped RNAs; the NAD-cap is an atypical cap present at the 5'-end of some RNAs. This is NAD(P)H pyrophosphatase NUDT13, mitochondrial from Homo sapiens (Human).